The following is a 59-amino-acid chain: Small ribosomal subunit protein bS21 (59 aa).

The disordered stretch occupies residues 40-59 (KPSVKRKKKSEAARKRKSFR). The segment covering 43–59 (VKRKKKSEAARKRKSFR) has biased composition (basic residues).

This sequence belongs to the bacterial ribosomal protein bS21 family.

The chain is Small ribosomal subunit protein bS21 from Desulforamulus reducens (strain ATCC BAA-1160 / DSM 100696 / MI-1) (Desulfotomaculum reducens).